A 58-amino-acid chain; its full sequence is MTGAGTPSQGKKNTTTHVKCRRCGEKSYHTKKKVCSSCGFGKSAKRRDYEWSSKTGDN.

Zn(2+) contacts are provided by Cys20, Cys23, Cys35, and Cys38. A C4-type zinc finger spans residues 20–38 (CRRCGEKSYHTKKKVCSSC).

This sequence belongs to the eukaryotic ribosomal protein eL37 family. Requires Zn(2+) as cofactor.

Functionally, binds to the 23S rRNA. This is Large ribosomal subunit protein eL37 from Haloquadratum walsbyi (strain DSM 16790 / HBSQ001).